Here is a 172-residue protein sequence, read N- to C-terminus: uncharacterized protein (172 aa).

3 helical membrane-spanning segments follow: residues 44–68 (VLVS…AALT), 86–110 (LASY…VFSL), and 117–135 (VVFI…VTLF).

The protein belongs to the chlamydial CPn_0442/CT_006/TC_0274 family.

It localises to the cell membrane. This is an uncharacterized protein from Chlamydia pneumoniae (Chlamydophila pneumoniae).